A 62-amino-acid polypeptide reads, in one-letter code: Conotoxin Lt5.8 (62 aa).

Positions 1 to 19 (MLCLPVFIILLLLVSPAAT) are cleaved as a signal peptide. A propeptide spanning residues 20–47 (MPVDLEILKAPTKESRKDFEMRIELLRS) is cleaved from the precursor. Glutamine 50 carries the pyrrolidone carboxylic acid modification. A Glutamine amide modification is found at glutamine 61.

The protein belongs to the conotoxin T superfamily. Contains 2 disulfide bonds that can be either 'C1-C3, C2-C4' or 'C1-C4, C2-C3', since these disulfide connectivities have been observed for conotoxins with cysteine framework V (for examples, see AC P0DQQ7 and AC P81755). In terms of tissue distribution, expressed by the venom duct.

It is found in the secreted. This chain is Conotoxin Lt5.8, found in Conus litteratus (Lettered cone).